The following is a 100-amino-acid chain: Large ribosomal subunit protein uL23 (100 aa).

Belongs to the universal ribosomal protein uL23 family. Part of the 50S ribosomal subunit. Contacts protein L29, and trigger factor when it is bound to the ribosome.

One of the early assembly proteins it binds 23S rRNA. One of the proteins that surrounds the polypeptide exit tunnel on the outside of the ribosome. Forms the main docking site for trigger factor binding to the ribosome. The sequence is that of Large ribosomal subunit protein uL23 from Mycobacterium leprae (strain Br4923).